A 470-amino-acid polypeptide reads, in one-letter code: Pyruvate kinase I (470 aa).

Arg32 is a substrate binding site. Residues Asn34, Ser36, Asp66, and Thr67 each contribute to the K(+) site. ATP is bound at residue 34–37 (NFSH). Residue Arg73 participates in ATP binding. Position 76 is an N6-acetyllysine (Lys76). Lys156 is a binding site for ATP. Glu222 contacts Mg(2+). Residues Gly245, Asp246, and Thr278 each contribute to the substrate site. Residue Asp246 coordinates Mg(2+). Lys319 is modified (N6-acetyllysine).

Belongs to the pyruvate kinase family. As to quaternary structure, homotetramer. It depends on Mg(2+) as a cofactor. K(+) is required as a cofactor.

It catalyses the reaction pyruvate + ATP = phosphoenolpyruvate + ADP + H(+). It participates in carbohydrate degradation; glycolysis; pyruvate from D-glyceraldehyde 3-phosphate: step 5/5. This chain is Pyruvate kinase I (pykF), found in Escherichia coli O157:H7.